Consider the following 449-residue polypeptide: Nucleoprotein (449 aa).

The tract at residues methionine 1 to serine 55 is disordered. Residues serine 9–glycine 22 show a composition bias toward low complexity. Composition is skewed to polar residues over residues glutamine 29–threonine 38 and serine 45–serine 55. Positions glutamine 52–serine 194 are RNA-binding. The region spanning proline 61–glycine 190 is the CoV N NTD domain. 3 residues coordinate RNA: arginine 106, arginine 122, and arginine 164. Disordered stretches follow at residues proline 158–aspartate 231, isoleucine 266–glycine 297, and methionine 387–isoleucine 449. Residue serine 167 is modified to Phosphoserine; by host. Threonine 174 bears the Phosphothreonine; by host mark. Position 191 is a phosphoserine; by host (serine 191). Polar residues-rich tracts occupy residues serine 194–alanine 204 and glycine 212–glycine 227. A CoV N CTD domain is found at alanine 259 to glutamate 384. Basic residues predominate over residues isoleucine 266–proline 276. The dimerization stretch occupies residues isoleucine 266–aspartate 385. Position 391 is a phosphoserine; by host (serine 391). Residues glutamine 400–valine 410 are compositionally biased toward polar residues. Positions lysine 423 to glutamate 440 are enriched in basic and acidic residues. A Phosphoserine; by host modification is found at serine 424. A Phosphothreonine; by host modification is found at threonine 428.

This sequence belongs to the betacoronavirus nucleocapsid protein family. As to quaternary structure, homooligomer. Both monomeric and oligomeric forms interact with RNA. Interacts with protein M. Interacts with NSP3; this interaction serves to tether the genome to the newly translated replicase-transcriptase complex at a very early stage of infection. Post-translationally, ADP-ribosylated. The ADP-ribosylation is retained in the virion during infection. In terms of processing, phosphorylated on serine and threonine residues.

It localises to the virion. Its subcellular location is the host endoplasmic reticulum-Golgi intermediate compartment. The protein resides in the host Golgi apparatus. Its function is as follows. Packages the positive strand viral genome RNA into a helical ribonucleocapsid (RNP) and plays a fundamental role during virion assembly through its interactions with the viral genome and membrane protein M. Plays an important role in enhancing the efficiency of subgenomic viral RNA transcription as well as viral replication. The polypeptide is Nucleoprotein (Sus scrofa (Pig)).